Reading from the N-terminus, the 379-residue chain is Lactosylceramide 1,3-N-acetyl-beta-D-glucosaminyltransferase A (379 aa).

The Cytoplasmic segment spans residues 1–12 (MFMNCRRVKKWH). The helical; Signal-anchor for type II membrane protein transmembrane segment at 13 to 30 (FLQLLSMCCVMSVLMVCW) threads the bilayer. The Lumenal segment spans residues 31-379 (EHVDHHVVSH…NTYSCMAAFT (349 aa)). Residues N57, N113, N168, and N277 are each glycosylated (N-linked (GlcNAc...) asparagine).

The protein belongs to the glycosyltransferase 31 family.

It localises to the golgi apparatus membrane. It catalyses the reaction a beta-D-Gal-(1-&gt;4)-beta-D-Glc-(1&lt;-&gt;1)-Cer(d18:1(4E)) + UDP-N-acetyl-alpha-D-glucosamine = a beta-D-GlcNAc-(1-&gt;3)-beta-D-Gal-(1-&gt;4)-beta-D-Glc-(1&lt;-&gt;1)-Cer(d18:1(4E)) + UDP + H(+). The catalysed reaction is a neolactoside nLc4Cer(d18:1(4E)) + UDP-N-acetyl-alpha-D-glucosamine = a neolactoside IV(3)-beta-GlcNAc-nLc4Cer(d18:1(4E)) + UDP + H(+). It functions in the pathway protein modification; protein glycosylation. Beta-1,3-N-acetylglucosaminyltransferase that plays a key role in the synthesis of lacto- or neolacto-series carbohydrate chains on glycolipids. The protein is Lactosylceramide 1,3-N-acetyl-beta-D-glucosaminyltransferase A (b3gnt5a) of Danio rerio (Zebrafish).